A 606-amino-acid chain; its full sequence is Polyphenol oxidase A1, chloroplastic (606 aa).

Residues 1–92 constitute a chloroplast transit peptide; that stretch reads MTSISALSFI…TLATNPSALA (92 aa). Positions 32 to 63 are disordered; the sequence is KQHQSSKLRKPKRQVTCSSNNNQNNPKEEQEL. Residues 35–44 show a composition bias toward basic residues; the sequence is QSSKLRKPKR. 2 cysteine pairs are disulfide-bonded: cysteine 103/cysteine 121 and cysteine 120/cysteine 182. 6 residues coordinate Cu cation: histidine 181, histidine 202, histidine 211, histidine 333, histidine 337, and histidine 367. Residues 185–202 constitute a cross-link (2'-(S-cysteinyl)-histidine (Cys-His)); sequence CDGAYSQIGFPDLKLQVH.

This sequence belongs to the tyrosinase family. Requires Cu(2+) as cofactor.

Its subcellular location is the plastid. It localises to the chloroplast thylakoid lumen. It catalyses the reaction 2 catechol + O2 = 2 1,2-benzoquinone + 2 H2O. In terms of biological role, catalyzes the oxidation of mono- and o-diphenols to o-diquinones. This Vicia faba (Broad bean) protein is Polyphenol oxidase A1, chloroplastic.